The primary structure comprises 446 residues: MSSSTSTIVAIASAAGTGGVGIVRLSGPQSRQIAVQLGVARLQPRHAHYARFRDAQGAVIDDGIALWFNAPHSFTGEDVVELQGHGSPVLLRQLVARCIELGARQARAGEFSERAFLNGKLDLAQAEAIADVIAAGDLRAARAARRALDGVFSRRVDAVAHTLTRLRIHVEAAIDFADEPLDTLGGNQVRDGLTQARTLLAQLLRDAERGRTLRDGLHAVLIGPPNAGKSSLLNALAGSDRAIVTDVAGTTRDTLHEAIQLDGFELTLVDTAGLRDGGDAIEREGMRRARAELERADLALVVLDARDPQAARAAIGDAIDAVPRQLWIHNKCDLLSDAAPLDVNAIAVSAVTGQGLEQLHIRLRELALGDGVESVDGEFSARTRHVEALRRAERHVDAADLELGFEQLELAAEELRLAHEALGEITGKISADDLLGKIFSSFCIGK.

3 residues coordinate (6S)-5-formyl-5,6,7,8-tetrahydrofolate: Arg24, Glu81, and Lys120. The 153-residue stretch at Gly216–Leu368 folds into the TrmE-type G domain. Position 226 (Asn226) interacts with K(+). GTP-binding positions include Asn226–Ser231, Thr245–Thr251, and Asp270–Gly273. Ser230 serves as a coordination point for Mg(2+). Thr245, Val247, and Thr250 together coordinate K(+). Position 251 (Thr251) interacts with Mg(2+). (6S)-5-formyl-5,6,7,8-tetrahydrofolate is bound at residue Lys446.

The protein belongs to the TRAFAC class TrmE-Era-EngA-EngB-Septin-like GTPase superfamily. TrmE GTPase family. Homodimer. Heterotetramer of two MnmE and two MnmG subunits. The cofactor is K(+).

The protein resides in the cytoplasm. In terms of biological role, exhibits a very high intrinsic GTPase hydrolysis rate. Involved in the addition of a carboxymethylaminomethyl (cmnm) group at the wobble position (U34) of certain tRNAs, forming tRNA-cmnm(5)s(2)U34. The chain is tRNA modification GTPase MnmE from Xanthomonas oryzae pv. oryzae (strain PXO99A).